Consider the following 900-residue polypeptide: Alanine--tRNA ligase (900 aa).

His604, His608, Cys708, and His712 together coordinate Zn(2+).

Belongs to the class-II aminoacyl-tRNA synthetase family. The cofactor is Zn(2+).

It is found in the cytoplasm. The enzyme catalyses tRNA(Ala) + L-alanine + ATP = L-alanyl-tRNA(Ala) + AMP + diphosphate. In terms of biological role, catalyzes the attachment of alanine to tRNA(Ala) in a two-step reaction: alanine is first activated by ATP to form Ala-AMP and then transferred to the acceptor end of tRNA(Ala). Also edits incorrectly charged Ser-tRNA(Ala) and Gly-tRNA(Ala) via its editing domain. The chain is Alanine--tRNA ligase from Saccharolobus islandicus (strain L.S.2.15 / Lassen #1) (Sulfolobus islandicus).